The primary structure comprises 402 residues: Tyrosine--tRNA ligase (402 aa).

The short motif at 47–56 is the 'HIGH' region element; the sequence is PTAPDLHLGH. The 'KMSKS' region signature appears at 232–236; the sequence is KMSKS. Position 235 (lysine 235) interacts with ATP. Positions 341–401 constitute an S4 RNA-binding domain; sequence VGILDVLKQI…GKKRFMKLNI (61 aa).

It belongs to the class-I aminoacyl-tRNA synthetase family. TyrS type 2 subfamily. Homodimer.

It is found in the cytoplasm. It carries out the reaction tRNA(Tyr) + L-tyrosine + ATP = L-tyrosyl-tRNA(Tyr) + AMP + diphosphate + H(+). Catalyzes the attachment of tyrosine to tRNA(Tyr) in a two-step reaction: tyrosine is first activated by ATP to form Tyr-AMP and then transferred to the acceptor end of tRNA(Tyr). This chain is Tyrosine--tRNA ligase, found in Helicobacter pylori (strain ATCC 700392 / 26695) (Campylobacter pylori).